A 137-amino-acid polypeptide reads, in one-letter code: Chaperone protein YscB (137 aa).

Interacts with SycN to form a complex which specifically binds to YopN.

Its subcellular location is the cytoplasm. It is found in the cell inner membrane. Functions as a specific chaperone for YopN. It could facilitate the secretion and the subsequent translocation of YopN. This chain is Chaperone protein YscB (yscB), found in Yersinia pestis.